The primary structure comprises 140 residues: Ribosome maturation factor RimP (140 aa).

This sequence belongs to the RimP family.

Its subcellular location is the cytoplasm. Functionally, required for maturation of 30S ribosomal subunits. In Campylobacter fetus subsp. fetus (strain 82-40), this protein is Ribosome maturation factor RimP.